The chain runs to 330 residues: Lipoyl synthase (330 aa).

Cysteine 77, cysteine 82, cysteine 88, cysteine 103, cysteine 107, cysteine 110, and serine 317 together coordinate [4Fe-4S] cluster. In terms of domain architecture, Radical SAM core spans 89–306; sequence FNHGTATFMI…RSEAERMGFE (218 aa).

The protein belongs to the radical SAM superfamily. Lipoyl synthase family. Requires [4Fe-4S] cluster as cofactor.

The protein resides in the cytoplasm. It carries out the reaction [[Fe-S] cluster scaffold protein carrying a second [4Fe-4S](2+) cluster] + N(6)-octanoyl-L-lysyl-[protein] + 2 oxidized [2Fe-2S]-[ferredoxin] + 2 S-adenosyl-L-methionine + 4 H(+) = [[Fe-S] cluster scaffold protein] + N(6)-[(R)-dihydrolipoyl]-L-lysyl-[protein] + 4 Fe(3+) + 2 hydrogen sulfide + 2 5'-deoxyadenosine + 2 L-methionine + 2 reduced [2Fe-2S]-[ferredoxin]. It functions in the pathway protein modification; protein lipoylation via endogenous pathway; protein N(6)-(lipoyl)lysine from octanoyl-[acyl-carrier-protein]: step 2/2. Catalyzes the radical-mediated insertion of two sulfur atoms into the C-6 and C-8 positions of the octanoyl moiety bound to the lipoyl domains of lipoate-dependent enzymes, thereby converting the octanoylated domains into lipoylated derivatives. The protein is Lipoyl synthase of Actinobacillus pleuropneumoniae serotype 3 (strain JL03).